The primary structure comprises 489 residues: UDP-N-acetylmuramate--L-alanine ligase (489 aa).

128–134 is an ATP binding site; sequence GTHGKTT.

The protein belongs to the MurCDEF family.

The protein localises to the cytoplasm. The catalysed reaction is UDP-N-acetyl-alpha-D-muramate + L-alanine + ATP = UDP-N-acetyl-alpha-D-muramoyl-L-alanine + ADP + phosphate + H(+). Its pathway is cell wall biogenesis; peptidoglycan biosynthesis. Functionally, cell wall formation. The polypeptide is UDP-N-acetylmuramate--L-alanine ligase (Shewanella halifaxensis (strain HAW-EB4)).